Here is a 126-residue protein sequence, read N- to C-terminus: Large ribosomal subunit protein bL12 (126 aa).

This sequence belongs to the bacterial ribosomal protein bL12 family. As to quaternary structure, homodimer. Part of the ribosomal stalk of the 50S ribosomal subunit. Forms a multimeric L10(L12)X complex, where L10 forms an elongated spine to which 2 to 4 L12 dimers bind in a sequential fashion. Binds GTP-bound translation factors.

In terms of biological role, forms part of the ribosomal stalk which helps the ribosome interact with GTP-bound translation factors. Is thus essential for accurate translation. This chain is Large ribosomal subunit protein bL12, found in Teredinibacter turnerae (strain ATCC 39867 / T7901).